The sequence spans 778 residues: MKPDAAREPEPLSPGRGAEAEGRWRERGEADTERQRTRERQEATLAGLAELGYLRQRQELLVRGALRCSGTVGTVAPRSGELRGDAAQRSRLEEKFLEENILLLRRQLNCLRRRDAGLLNQLQELDKQISDLRLDVEKTSEEHLETDSRPSSGFYELSDGASGSLSNSSNSVFSECLSSCHSSTCFCSPLEAALTISDGCPKSADVNPKYQCDLVSKNGNDVYRYPSPLHAVAVQSPMFLLCLTGNTLREEEGLGSHASDICIGSELNATKTDNSLPSPSSLWSASHPASSKKMDGYILSLVQKKTHPVRTNKPRTSVNADPTKGLLRNGSVCVRAPSGVPPGSSVNFKNTKQMCLPAGGITSLENGPFSPPKQRSKDSKTDQLESKRLALPESCSAGAAMEPQSKHVPKAAKAASQELTRCQAGLGESMKESNQASAVSPKTSPGRGPVAPAESKALQLPKKMSQKNSLQAVPALDRPALDFKSEGSSQSLEEGHLVKAQFIPGQQAAARPHRAHRNPGVARSATLKARGQAAMEHGLPTVREKPRAAGKKCRFPDDSDTNKKFRKTSAKGRRSGGLQDAGLPGRALGTGGHRAGSRAHAHGREPVVAKPKHKRTDYRRWKSSAEVSYEEALRRARRARREHGAAYRVAVALPYASPYAYVPSDSEYSAECESLFHSTVVDTSEDEQSNYTTNCFGDSESSVSEGDFVGESTTTSDSEESGGLIWSQFVQTLPIQTVTAPDLHTRPTKTFVKIKASHNLKKKILRFRSGSLKLMTTV.

2 stretches are compositionally biased toward basic and acidic residues: residues 1-10 (MKPDAAREPE) and 18-40 (AEAE…TRER). Positions 1–40 (MKPDAAREPEPLSPGRGAEAEGRWRERGEADTERQRTRER) are disordered. The tract at residues 85–149 (DAAQRSRLEE…SEEHLETDSR (65 aa)) is required for self-association. A coiled-coil region spans residues 85 to 149 (DAAQRSRLEE…SEEHLETDSR (65 aa)). Residues 125–134 (LDKQISDLRL) carry the Nuclear export signal motif. Disordered regions lie at residues 305-324 (KTHP…DPTK), 359-386 (GGIT…QLES), 397-416 (AGAA…KAAS), 428-468 (ESMK…SQKN), 544-616 (EKPR…HKRT), and 694-721 (NCFG…SEES). A compositionally biased stretch (basic and acidic residues) spans 375-386 (RSKDSKTDQLES). Positions 432-443 (ESNQASAVSPKT) are enriched in polar residues. Positions 551–564 (KKCRFPDDSDTNKK) match the Bipartite nuclear localization signal motif. The span at 554-563 (RFPDDSDTNK) shows a compositional bias: basic and acidic residues. The span at 564 to 574 (KFRKTSAKGRR) shows a compositional bias: basic residues. Over residues 694-704 (NCFGDSESSVS) the composition is skewed to polar residues. The PDZ-binding motif lies at 768 to 778 (RSGSLKLMTTV). Serine 769 carries the phosphoserine; by PKA modification.

It belongs to the dapper family. In terms of assembly, can form homodimers and heterodimers with DACT2 or DACT3. Interacts with CSNK1D, PKA catalytic subunit, PKC-type kinase, CSNK2A1, CSNK2B, DVL1, DLV2, DVAL3, VANGL1, VANGL2, CTNND1 and HDAC1. Interacts with GSK3B; the interaction is indicative for an association of DACT1 with the beta-catenin destruction complex. Interacts with GSK3A. Interacts with YWHAB; the interaction is enhanced by PKA phosphorylating DACT1 at Ser-769. Interacts with CTNNB1. In terms of tissue distribution, expressed in multiple tissues including brain, heart, kidney, liver and testis.

It is found in the cytoplasm. The protein resides in the nucleus. Its subcellular location is the synapse. Functionally, involved in regulation of intracellular signaling pathways during development. Specifically thought to play a role in canonical and/or non-canonical Wnt signaling pathways through interaction with DSH (Dishevelled) family proteins. The activation/inhibition of Wnt signaling may depend on the phosphorylation status. Proposed to regulate the degradation of CTNNB1/beta-catenin, thereby modulating the transcriptional activation of target genes of the Wnt signaling pathway. Its function in stabilizing CTNNB1 may involve inhibition of GSK3B activity. Promotes the membrane localization of CTNNB1. The cytoplasmic form can induce DVL2 degradation via a lysosome-dependent mechanism; the function is inhibited by PKA-induced binding to 14-3-3 proteins, such as YWHAB. Seems to be involved in morphogenesis at the primitive streak by regulating VANGL2 and DVL2; the function seems to be independent of canonical Wnt signaling and rather involves the non-canonical Wnt/planar cell polarity (PCP) pathway. The nuclear form may prevent the formation of LEF1:CTNNB1 complex and recruit HDAC1 to LEF1 at target gene promoters to repress transcription thus antagonizing Wnt signaling. May be involved in positive regulation of fat cell differentiation. During neuronal differentiation may be involved in excitatory synapse organization, and dendrite formation and establishment of spines. This Mus musculus (Mouse) protein is Dapper homolog 1 (Dact1).